The sequence spans 162 residues: Lipid droplet assembly factor 1-A (162 aa).

The Cytoplasmic segment spans residues 1–42 (MASAENLYQEKMQELQKQMNKVMQTINNHSKVEAFLNSPFGQ). Residues 43-63 (YLDQHPFVTLSLLVFISLSAV) form a helical membrane-spanning segment. The Lumenal segment spans residues 64-65 (PV). Residues 66–86 (GIFLTLIAGTAIAVCLAVLII) form a helical membrane-spanning segment. Position 87 (Glu-87) is a topological domain, cytoplasmic. A helical membrane pass occupies residues 88 to 108 (GIVISVGGIALLCILCGLAVM). Residue Ser-109 is a topological domain, lumenal. Residues 110–130 (LGVAAVLCVSYVAGSSVLNYI) form a helical membrane-spanning segment. The Cytoplasmic segment spans residues 131 to 162 (HAYRVTVGTRGRSGPISLNHETTTAEKSYRSS).

It belongs to the LDAF1 family.

It localises to the endoplasmic reticulum membrane. Its subcellular location is the lipid droplet. Functionally, plays an important role in the formation of lipid droplets (LD) which are storage organelles at the center of lipid and energy homeostasis. The sequence is that of Lipid droplet assembly factor 1-A from Xenopus laevis (African clawed frog).